The sequence spans 338 residues: MKILYWGTPEYAVPTLLALHAAGHEIVGVVTQPDRRRGRGKQLMPSAIKVCAQSLGLAVFTPERIKTDVGCQKELADLNADVSVVVAFGQILPKSVLEQPPLGCWNGHGSLLPRWRGAGPIQWALLEGDSETGVGIMAMEEGLDTGPVLLEQRLPISLDQNSHDLGEKLSQLTATLMVEAVDLILKAGVGTEPERLERLNVRYQGQEMSYARMLKKEDFQIKWGDPALRTHRRVMGLYPSAMTGWRNKRLKVLETEPLIERLSDEISEEARALLGRWRTGEDHPGTVLGCINNVGIVVSTSGCPILIREAQLEGKGRCRAQGLVQQLAASVGDRFQSF.

Position 110-113 (110-113 (SLLP)) interacts with (6S)-5,6,7,8-tetrahydrofolate.

The protein belongs to the Fmt family.

The catalysed reaction is L-methionyl-tRNA(fMet) + (6R)-10-formyltetrahydrofolate = N-formyl-L-methionyl-tRNA(fMet) + (6S)-5,6,7,8-tetrahydrofolate + H(+). Attaches a formyl group to the free amino group of methionyl-tRNA(fMet). The formyl group appears to play a dual role in the initiator identity of N-formylmethionyl-tRNA by promoting its recognition by IF2 and preventing the misappropriation of this tRNA by the elongation apparatus. In Synechococcus sp. (strain CC9902), this protein is Methionyl-tRNA formyltransferase.